The following is a 612-amino-acid chain: UvrABC system protein C (612 aa).

Residues 11–90 (TASGVYLMKG…IKKYRPRYNI (80 aa)) form the GIY-YIG domain. The 36-residue stretch at 200 to 235 (SEVVESLQHQMAAAAERMAFEEAARLRDQLRAIEQT) folds into the UVR domain.

It belongs to the UvrC family. As to quaternary structure, interacts with UvrB in an incision complex.

The protein localises to the cytoplasm. Its function is as follows. The UvrABC repair system catalyzes the recognition and processing of DNA lesions. UvrC both incises the 5' and 3' sides of the lesion. The N-terminal half is responsible for the 3' incision and the C-terminal half is responsible for the 5' incision. The chain is UvrABC system protein C from Syntrophotalea carbinolica (strain DSM 2380 / NBRC 103641 / GraBd1) (Pelobacter carbinolicus).